The sequence spans 413 residues: Hemolin (413 aa).

Residues methionine 1–leucine 19 form the signal peptide. Ig-like C2-type domains follow at residues proline 25–serine 112, proline 122–valine 211, proline 233–threonine 322, and proline 327–asparagine 413. 4 cysteine pairs are disulfide-bonded: cysteine 46–cysteine 97, cysteine 140–cysteine 199, cysteine 252–cysteine 305, and cysteine 349–cysteine 395. Asparagine 283 is a glycosylation site (N-linked (GlcNAc...) asparagine).

Belongs to the hemolin family. As to expression, hemolymph.

The protein resides in the secreted. Its subcellular location is the extracellular space. Its function is as follows. Insect-immune protein. Forms a protein complex at the bacterial surface. Can inhibit hemocyte aggregation. This is Hemolin from Hyalophora cecropia (Cecropia moth).